The primary structure comprises 89 residues: Small ribosomal subunit protein bS20 (89 aa).

The protein belongs to the bacterial ribosomal protein bS20 family.

In terms of biological role, binds directly to 16S ribosomal RNA. The sequence is that of Small ribosomal subunit protein bS20 from Phenylobacterium zucineum (strain HLK1).